Reading from the N-terminus, the 310-residue chain is Forkhead box protein pes-1 (310 aa).

Residues 1 to 16 are compositionally biased toward polar residues; sequence MLPLSISTSPDPASQF. 4 disordered regions span residues 1–37, 58–77, 92–126, and 217–242; these read MLPL…GTAK, VSPS…SPAP, KQSS…SNPN, and SLRR…PNPI. Positions 17 to 35 are enriched in low complexity; it reads PTVPDLPTLTPTPSPTSGT. Residues 128–220 constitute a DNA-binding region (fork-head); the sequence is RPAYSYNALI…IGKDCGSLRR (93 aa). Residues 218–231 are compositionally biased toward basic residues; sequence LRRKKNGKPRKYSK.

It is found in the nucleus. The protein localises to the cytoplasm. Transcription factor. Plays a role in embryogenesis and later development, perhaps acting redundantly with forkhead protein fkh-2. The polypeptide is Forkhead box protein pes-1 (Caenorhabditis briggsae).